Consider the following 190-residue polypeptide: MAAIKPITTYKGKIVPLFNDNIDTDQIIPKVHLKRISKSGFGPFAFDEWRYLPDGSDNPDFNPNKPQYKGASILITGDNFGCGSSREHAAWALKDYGFHIIIAGSFSDIFYMNCTKNAMLPIVLEKSAREHLAQYVEIEVDLPNQTVSSPDKRFHFEIDETWKNKLVNGLDDIAITLQYESLIEKYEKSL.

It belongs to the LeuD family. LeuD type 1 subfamily. Heterodimer of LeuC and LeuD.

It carries out the reaction (2R,3S)-3-isopropylmalate = (2S)-2-isopropylmalate. The protein operates within amino-acid biosynthesis; L-leucine biosynthesis; L-leucine from 3-methyl-2-oxobutanoate: step 2/4. Its function is as follows. Catalyzes the isomerization between 2-isopropylmalate and 3-isopropylmalate, via the formation of 2-isopropylmaleate. In Staphylococcus aureus (strain USA300), this protein is 3-isopropylmalate dehydratase small subunit.